The sequence spans 436 residues: 3-ketoacyl-CoA thiolase (436 aa).

Cys99 (acyl-thioester intermediate) is an active-site residue. Residues His392 and Cys422 each act as proton acceptor in the active site.

This sequence belongs to the thiolase-like superfamily. Thiolase family. Heterotetramer of two alpha chains (FadJ) and two beta chains (FadI).

The protein localises to the cytoplasm. The enzyme catalyses an acyl-CoA + acetyl-CoA = a 3-oxoacyl-CoA + CoA. Its pathway is lipid metabolism; fatty acid beta-oxidation. In terms of biological role, catalyzes the final step of fatty acid oxidation in which acetyl-CoA is released and the CoA ester of a fatty acid two carbons shorter is formed. In Shewanella loihica (strain ATCC BAA-1088 / PV-4), this protein is 3-ketoacyl-CoA thiolase.